The chain runs to 424 residues: Enolase (424 aa).

Gln163 contributes to the (2R)-2-phosphoglycerate binding site. The Proton donor role is filled by Glu205. Residues Asp242, Glu285, and Asp312 each contribute to the Mg(2+) site. (2R)-2-phosphoglycerate is bound by residues Lys337, Arg366, Ser367, and Lys388. The Proton acceptor role is filled by Lys337.

It belongs to the enolase family. It depends on Mg(2+) as a cofactor.

Its subcellular location is the cytoplasm. It localises to the secreted. It is found in the cell surface. The enzyme catalyses (2R)-2-phosphoglycerate = phosphoenolpyruvate + H2O. It functions in the pathway carbohydrate degradation; glycolysis; pyruvate from D-glyceraldehyde 3-phosphate: step 4/5. Its function is as follows. Catalyzes the reversible conversion of 2-phosphoglycerate (2-PG) into phosphoenolpyruvate (PEP). It is essential for the degradation of carbohydrates via glycolysis. The polypeptide is Enolase (Dinoroseobacter shibae (strain DSM 16493 / NCIMB 14021 / DFL 12)).